A 319-amino-acid polypeptide reads, in one-letter code: MPGRAAHQEAAAAGGAAAEPTAAGGSAGAVAQQPEQQGLAGAFPLVLKKLMENPPRDARLDKEKKIKLEEDEAAAASTMAVSASLMPPIWDKTIPYDGESFHLEYMDLDEFLLENGIPSSPTHLDLNQNPLMPVAKLEEKEPASASTGSPVSSSSTAVYQQSEAASSTESPPQNERNTPSPIDPDCVEVEVNFNPDPADLVLSSVPGGELFNPRKHKFTEEDLKPQPMIKKAKKVFVPDEQKDEKYWTRRKKNNVAAKRSRDARRLKENQITIRAAFLEKENTALRTEVAELRKEVGRCKNIVSKYETRYGPFDLSDSE.

Low complexity-rich tracts occupy residues 1–31 and 143–158; these read MPGRAAHQEAAAAGGAAAEPTAAGGSAGAVA and ASASTGSPVSSSSTAV. 2 disordered regions span residues 1–35 and 139–186; these read MPGRAAHQEAAAAGGAAAEPTAAGGSAGAVAQQPE and EKEP…DPDC. Residues 159-180 are compositionally biased toward polar residues; it reads YQQSEAASSTESPPQNERNTPS. The region spanning 243–306 is the bZIP domain; the sequence is DEKYWTRRKK…GRCKNIVSKY (64 aa). A basic motif region spans residues 245–265; it reads KYWTRRKKNNVAAKRSRDARR. The leucine-zipper stretch occupies residues 266 to 273; sequence LKENQITI.

The protein belongs to the bZIP family. PAR subfamily. As to quaternary structure, binds DNA as a homodimer or a heterodimer. Exists as a stable dimer in the absence of DNA. Isoform 1 and isoform 3 are expressed in a variety of somatic tissues, including liver, heart, intestine, stomach and kidney. Both isoforms are also expressed in hepatoma (LMH) cells and in embryonic fibroblast cell lines. Isoform 2 and isoform 4 are expressed in adult heart and intestine.

The protein resides in the nucleus. Functionally, transcription factor that binds to and transactivates the vitellogenin II (VTG2) promoter. Binds to the palindromic sequence 5'-GTTTACATAAAC-3'. The sequence is that of Transcription factor VBP (TEF) from Gallus gallus (Chicken).